The primary structure comprises 1370 residues: DNA-directed RNA polymerase subunit beta (1370 aa).

It belongs to the RNA polymerase beta chain family. The RNAP catalytic core consists of 2 alpha, 1 beta, 1 beta' and 1 omega subunit. When a sigma factor is associated with the core the holoenzyme is formed, which can initiate transcription.

It catalyses the reaction RNA(n) + a ribonucleoside 5'-triphosphate = RNA(n+1) + diphosphate. DNA-dependent RNA polymerase catalyzes the transcription of DNA into RNA using the four ribonucleoside triphosphates as substrates. The protein is DNA-directed RNA polymerase subunit beta of Polaromonas naphthalenivorans (strain CJ2).